We begin with the raw amino-acid sequence, 411 residues long: Arginine deiminase (411 aa).

The active-site Amidino-cysteine intermediate is the Cys401.

It belongs to the arginine deiminase family.

It is found in the cytoplasm. It catalyses the reaction L-arginine + H2O = L-citrulline + NH4(+). Its pathway is amino-acid degradation; L-arginine degradation via ADI pathway; carbamoyl phosphate from L-arginine: step 1/2. The sequence is that of Arginine deiminase from Streptococcus equi subsp. zooepidemicus (strain H70).